We begin with the raw amino-acid sequence, 508 residues long: Aldehyde dehydrogenase (508 aa).

Residues Glu-264 and Cys-303 contribute to the active site.

Belongs to the aldehyde dehydrogenase family.

It carries out the reaction acetaldehyde + NAD(+) + H2O = acetate + NADH + 2 H(+). It functions in the pathway organosulfur degradation. Catalyzes the NAD(+)-dependent oxidation of acetaldehyde to acetate. In Paracoccus denitrificans (strain Pd 1222), this protein is Aldehyde dehydrogenase.